Here is a 497-residue protein sequence, read N- to C-terminus: TBC1 domain family member 22A (497 aa).

The disordered stretch occupies residues 83–147 (RNHSQRQGRP…DAAPLQRSQS (65 aa)). Ser-112, Ser-125, and Ser-147 each carry phosphoserine. The Rab-GAP TBC domain occupies 202–426 (GIPKPVRPMT…RLWDTYQSEP (225 aa)).

Homodimer. Interacts with ACBD3 and ARFGEF1. Interacts with YWHAB, YWHAE, YWHAG, YWHAH, YWHAQ and YWHAZ.

In terms of biological role, may act as a GTPase-activating protein for Rab family protein(s). The protein is TBC1 domain family member 22A (TBC1D22A) of Macaca fascicularis (Crab-eating macaque).